The chain runs to 307 residues: Transcription factor bHLH127 (307 aa).

2 disordered regions span residues 41 to 68 (SDPL…LPHQ) and 101 to 155 (PHPQ…AEMH). Residues 110–119 (APPPPKPPSS) show a composition bias toward pro residues. The 50-residue stretch at 150-199 (RAAEMHNLAERRRREKINERMKTLQQLIPRCNKSTKVSMLEDVIEYVKSL) folds into the bHLH domain.

The protein belongs to the bHLH protein family. As to quaternary structure, homodimer.

It localises to the nucleus. The chain is Transcription factor bHLH127 (BHLH127) from Arabidopsis thaliana (Mouse-ear cress).